Consider the following 615-residue polypeptide: MPIQVLPPQLANQIAAGEVVERPASVVKELVENSLDAGATRIDIDIERGGAKLIRIRDNGCGIKKDELALALARHATSKIASLDDLEAIISLGFRGEALASISSVSRLTLTSRTAEQQEAWQAYAEGRDMDVTVKPAAHPVGTTLEVLDLFYNTPARRKFLRTEKTEFNHIDEIIRRIALARFDVTINLSHNGKIVRQYRAVPEGGQKERRLGAICGTAFLEQALAIEWQHGDLTLRGWVADPNHTTPALAEIQYCYVNGRMMRDRLINHAIRQACEDKLGADQQPAFVLYLEIDPHQVDVNVHPAKHEVRFHQSRLVHDFIYQGVLSVLQQQLETPLPLDDEPQPAPRPIPENRVAAGRNHFAEPAVREPVAPRYTPAPASGSRPAAPWPNAQPGYQKQQGEVYRQLLQTPAPMQKPKAPEPQEPALAANSQSFGRVLTIVHSDCALLERDGNISLLALPVAERWLRQVQLTPGEAPVCAQPLLIPLRLKVSGEEKSALEKAQSALAELGIDFQSDAQHVTIRAVPLPLRQQNLQILIPELIGYLAKQSVFEPGNIAQWIARNLMSEHAQWSMAQAITLLADVERLCPQLVKTPPGGLLQSVDLHPAIKALKDE.

Residues 363–397 form a disordered region; that stretch reads FAEPAVREPVAPRYTPAPASGSRPAAPWPNAQPGY. The span at 378–391 shows a compositional bias: low complexity; the sequence is PAPASGSRPAAPWP.

It belongs to the DNA mismatch repair MutL/HexB family.

This protein is involved in the repair of mismatches in DNA. It is required for dam-dependent methyl-directed DNA mismatch repair. May act as a 'molecular matchmaker', a protein that promotes the formation of a stable complex between two or more DNA-binding proteins in an ATP-dependent manner without itself being part of a final effector complex. The protein is DNA mismatch repair protein MutL of Escherichia coli O157:H7 (strain EC4115 / EHEC).